The following is a 441-amino-acid chain: Proline--tRNA ligase (441 aa).

Belongs to the class-II aminoacyl-tRNA synthetase family. ProS type 2 subfamily. Homodimer.

The protein resides in the cytoplasm. The catalysed reaction is tRNA(Pro) + L-proline + ATP = L-prolyl-tRNA(Pro) + AMP + diphosphate. In terms of biological role, catalyzes the attachment of proline to tRNA(Pro) in a two-step reaction: proline is first activated by ATP to form Pro-AMP and then transferred to the acceptor end of tRNA(Pro). This is Proline--tRNA ligase from Bartonella bacilliformis (strain ATCC 35685 / KC583 / Herrer 020/F12,63).